The sequence spans 248 residues: Ethylene-responsive transcription factor ERF026 (248 aa).

A DNA-binding region (AP2/ERF) is located at residues 89-145 (VYRGIRCRSGKWVSEIREPKKTTRVWLGTYPTPEMAAAAYDVAALALKGGDTLLNFP). Positions 225–248 (PPWMGSPPSDDSPENSDGESLWSY) are disordered.

Belongs to the AP2/ERF transcription factor family. ERF subfamily.

It is found in the nucleus. Probably acts as a transcriptional activator. Binds to the GCC-box pathogenesis-related promoter element. May be involved in the regulation of gene expression by stress factors and by components of stress signal transduction pathways. The protein is Ethylene-responsive transcription factor ERF026 (ERF026) of Arabidopsis thaliana (Mouse-ear cress).